A 902-amino-acid chain; its full sequence is Adhesion G-protein coupled receptor D1 (902 aa).

The N-terminal stretch at 1-25 is a signal peptide; the sequence is MKKLLPLCCWHSWLLLFYCDFQVRG. The Extracellular segment spans residues 26–598; it reads AHTRSHVHPG…GHQVALSSIS (573 aa). N-linked (GlcNAc...) asparagine glycans are attached at residues Asn68, Asn76, Asn83, Asn89, Asn121, Asn183, Asn217, Asn310, Asn330, Asn337, Asn347, Asn422, Asn504, Asn529, and Asn561. The 194-residue stretch at 111–304 folds into the Pentraxin (PTX) domain; that stretch reads KGVTFLYYRK…VNTMAPTNAY (194 aa). One can recognise a GAIN-B domain in the interval 399–585; sequence QVAIVGSSSM…AILMQVVPLE (187 aa). 2 disulfides stabilise this stretch: Cys538–Cys567 and Cys555–Cys569. The interval 538–585 is GPS; that stretch reads CAFLDFSSGEGIWSNQGCALTEGNLSYSICRCTHLTNFAILMQVVPLE. The interval 574-582 is stachel; sequence NFAILMQVV. A 17beta-hydroxy-5alpha-androstan-3-one-binding site is contributed by Gln591. Residues 599-619 traverse the membrane as a helical segment; it reads YIGCSLSVLCLAITLVTFAVL. Over 620-630 the chain is Cytoplasmic; sequence SSVSTIRNQRY. Residues 631-651 traverse the membrane as a helical segment; sequence HIHANLSCAVLVAQVLLLISF. Residues 652–661 are Extracellular-facing; the sequence is RFEPGTAPCQ. A disulfide bridge connects residues Cys660 and Cys732. Residues 662–682 traverse the membrane as a helical segment; that stretch reads VLAMLLHYFFLSAFAWMLVEG. The Cytoplasmic portion of the chain corresponds to 683-702; that stretch reads LHLYSMVIKVFGSEDSKHRY. The chain crosses the membrane as a helical span at residues 703–723; that stretch reads YYGIGWGFPLLICIISIVFAM. The Extracellular portion of the chain corresponds to 724–739; sequence DSYGTSKNCWLSLGNG. A helical transmembrane segment spans residues 740–760; the sequence is AIWAFVAPALFIIVVNIGILI. Over 761–788 the chain is Cytoplasmic; sequence AVTRVISQISAENYKIHGDPSAFKLTAK. The chain crosses the membrane as a helical span at residues 789-809; it reads AVAVLLPILGTSWVFGVLAVN. Over 810 to 812 the chain is Extracellular; that stretch reads NQA. A helical membrane pass occupies residues 813-833; it reads MVFQYMFAILNSLQGFFIFLF. At 834-902 the chain is on the cytoplasmic side; it reads HCLLNSEVRA…SGHRVDLSAV (69 aa). The disordered stretch occupies residues 865 to 902; that stretch reads KPFSSDIMNGTRPATGSTRLSPWDKSSHSGHRVDLSAV. The segment covering 870–884 has biased composition (polar residues); it reads DIMNGTRPATGSTRL. Over residues 889–902 the composition is skewed to basic and acidic residues; it reads KSSHSGHRVDLSAV.

The protein belongs to the G-protein coupled receptor 2 family. Adhesion G-protein coupled receptor (ADGR) subfamily. In terms of assembly, heterodimer of 2 chains generated by proteolytic processing; the large extracellular N-terminal fragment and the membrane-bound C-terminal fragment predominantly remain associated and non-covalently linked. Interacts with ESYT1; interaction takes place in absence of cytosolic calcium and inhibits the G protein-coupled receptor activity of ADGRD1. In terms of processing, autoproteolytically processed at the GPS region of the GAIN-B domain; this cleavage modulates receptor activity. Cleavage takes place early in the secretory pathway before N-glycosylation.

It is found in the cell membrane. Forms a heterodimer of 2 chains generated by proteolytic processing that remain associated through non-covalent interactions mediated by the GAIN-B domain. In the inactivated receptor, the Stachel sequence (also named stalk) is embedded in the GAIN-B domain, where it adopts a beta-strand conformation. On activation, the Stachel moves into the 7 transmembrane region and adopts a twisted hook-shaped configuration that forms contacts within the receptor, leading to coupling of a G-alpha protein, which activates signaling. The cleaved GAIN-B and N-terminal domains can then dissociate from the rest of the receptor. Interaction with ESYT1 in absence of cytosolic calcium inhibits the G protein-coupled receptor activity; interaction and inhibition is relieved when cytosolic calcium increases. Functionally, adhesion G-protein coupled receptor (aGPCR) for androgen hormone 5alpha-dihydrotestosterone (5alpha-DHT), also named 17beta-hydroxy-5alpha-androstan-3-one, the most potent hormone among androgens. Also activated by methenolone drug. Ligand binding causes a conformation change that triggers signaling via guanine nucleotide-binding proteins (G proteins) and modulates the activity of downstream effectors, such as adenylate cyclase. ADGRD1 is coupled to G(s) G proteins and mediates activation of adenylate cyclase activity. Acts as a 5alpha-DHT receptor in muscle cells, thereby increasing intracellular cyclic AMP (cAMP) levels and enhancing muscle strength. The polypeptide is Adhesion G-protein coupled receptor D1 (ADGRD1) (Bos taurus (Bovine)).